Consider the following 381-residue polypeptide: DnaJ-related protein spj1 (381 aa).

Residues 5-74 form the J domain; sequence NFSQKQILGV…RKIYDAYGEE (70 aa). Positions 72-93 are disordered; the sequence is GEEGLNGQPGGPGGGPGEGFPG. Over residues 78–93 the composition is skewed to gly residues; the sequence is GQPGGPGGGPGEGFPG. The CR-type zinc finger occupies 138–225; the sequence is GGSFTLEIPV…CKGERVAEVV (88 aa). 4 CXXCXGXG motif repeats span residues 151 to 158, 172 to 179, 199 to 206, and 213 to 220; these read CSVCSGQG, CPVCGGSG, CNACNGNG, and CPRCKGER. A Prevents secretion from ER motif is present at residues 378-381; the sequence is FDEL.

It is found in the endoplasmic reticulum. The sequence is that of DnaJ-related protein spj1 (spj1) from Schizosaccharomyces pombe (strain 972 / ATCC 24843) (Fission yeast).